We begin with the raw amino-acid sequence, 475 residues long: Kynureninase (475 aa).

Residues L141, T142, 169–172, D254, H257, and Y279 each bind pyridoxal 5'-phosphate; that span reads FPSD. At K280 the chain carries N6-(pyridoxal phosphate)lysine. Residues W319 and N347 each contribute to the pyridoxal 5'-phosphate site.

Belongs to the kynureninase family. In terms of assembly, homodimer. It depends on pyridoxal 5'-phosphate as a cofactor.

It is found in the cytoplasm. It catalyses the reaction L-kynurenine + H2O = anthranilate + L-alanine + H(+). The catalysed reaction is 3-hydroxy-L-kynurenine + H2O = 3-hydroxyanthranilate + L-alanine + H(+). It participates in amino-acid degradation; L-kynurenine degradation; L-alanine and anthranilate from L-kynurenine: step 1/1. The protein operates within cofactor biosynthesis; NAD(+) biosynthesis; quinolinate from L-kynurenine: step 2/3. Catalyzes the cleavage of L-kynurenine (L-Kyn) and L-3-hydroxykynurenine (L-3OHKyn) into anthranilic acid (AA) and 3-hydroxyanthranilic acid (3-OHAA), respectively. This is Kynureninase (bna5) from Sclerotinia sclerotiorum (strain ATCC 18683 / 1980 / Ss-1) (White mold).